Consider the following 377-residue polypeptide: MAEDKHNKNPLKMLESLGKELISGLLDDFVEKNVLKLEEEEKKKIYDAKLQDKARVLVDSIRQKNQEAGQVFVQTFLNIDKNSTSIKAPEETVAGPDESVGSAATLKLCPHEEFLKLCKERAGEIYPIKERKDRTRLALIICNTEFDHMPPRNGAALDILGMKQLLEGLGYTVEVEEKLTARDMESVLWKFAAREEHKSSDSTFLVFMSHGILDGICGTMHSEEEPDVLPYDTIFRTFNNRNCLSLKDKPKVIIVQACRGANRGELWVSDSPPALADSFSQSSENLEEDAVYKTHVEKDFIAFCSSTPHNVSWRDIKKGSLFITRLITCFQKYAWCCHLEEVFRKVQQSFEKPNVKAQMPTVERLSMTRYFYLFPGN.

Positions 1–59 are required for LPS-binding; the sequence is MAEDKHNKNPLKMLESLGKELISGLLDDFVEKNVLKLEEEEKKKIYDAKLQDKARVLVD. A propeptide spanning residues 1–80 is cleaved from the precursor; the sequence is MAEDKHNKNP…VFVQTFLNID (80 aa). Positions 1-91 constitute a CARD domain; the sequence is MAEDKHNKNP…NSTSIKAPEE (91 aa). The residue at position 83 (serine 83) is a Phosphoserine. Residues histidine 210 and cysteine 258 contribute to the active site. A propeptide spanning residues 271–289 is cleaved from the precursor; that stretch reads SPPALADSFSQSSENLEED.

Belongs to the peptidase C14A family. In terms of assembly, heterotetramer that consists of two anti-parallel arranged heterodimers, each one formed by a 20 kDa (Caspase-4 subunit p20) and a 10 kDa (Caspase-4 subunit p10) subunit. Upon direct LPS-binding, forms large homooligomers, resulting in its activation. These oligomers are often referred to as 'non-canonical inflammasomes'. In its precursor form, interacts with TMEM214; this interaction is required for association with the endoplasmic reticulum membrane. Interacts with CASP1. Interacts with NOD2. Interacts with Serpinb1a, Serpinb1b and Serpinb1c; these interactions regulate CASP4 activity. Heterotetramer that consists of two anti-parallel arranged heterodimers, each one formed by a 20 kDa (Caspase-4 subunit p20) and a 10 kDa (Caspase-4 subunit p10) subunit. Post-translationally, in response to activation signals, undergoes autoproteolytic cleavage and activation.

Its subcellular location is the cytoplasm. The protein localises to the cytosol. It is found in the endoplasmic reticulum membrane. It localises to the mitochondrion. The protein resides in the inflammasome. Its subcellular location is the secreted. The catalysed reaction is Strict requirement for Asp at the P1 position. It has a preferred cleavage sequence of Tyr-Val-Ala-Asp-|- but also cleaves at Asp-Glu-Val-Asp-|-.. Its activity is regulated as follows. Activated by homooligomerization induced by direct binding to cytosolic LPS, in a TLR4-independent manner. In addition to LPS, CASP4/CASP11 may also be activated by oxidized phospholipid 1-palmitoyl-2-arachidonoyl- sn-glycero-3-phosphorylcholine, an oxidized phospholipid (oxPAPC), in dendritic cells, promoting adaptive immunity. The role of oxPAPC is however unclear and another report suggests that oxPAPC competes with LPS-binding and inhibits the non-canonical inflammasome in macrophages. Its function is as follows. Inflammatory caspase that acts as the effector of the non-canonical inflammasome by mediating lipopolysaccharide (LPS)-induced pyroptosis. Also indirectly activates the NLRP3 and NLRP6 inflammasomes. Acts as a thiol protease that cleaves a tetrapeptide after an Asp residue at position P1: catalyzes cleavage of CGAS, GSDMD and IL18. Effector of the non-canonical inflammasome independently of NLRP3 inflammasome and CASP1: the non-canonical inflammasome promotes pyroptosis through GSDMD cleavage without involving secretion of cytokine IL1B. In the non-canonical inflammasome, CASP4 is activated by direct binding to the lipid A moiety of LPS without the need of an upstream sensor. LPS-binding promotes CASP4 activation and CASP4-mediated cleavage of GSDMD and IL18, followed by IL18 secretion through the GSDMD pore, pyroptosis of infected cells and their extrusion into the gut lumen. Also indirectly promotes secretion of mature cytokines (IL1A and HMGB1) downstream of GSDMD-mediated pyroptosis via activation of the NLRP3 and NLRP6 inflammasomes. Involved in NLRP3-dependent CASP1 activation and IL1B secretion in response to non-canonical activators, such as UVB radiation or cholera enterotoxin. Involved in NLRP6 inflammasome-dependent activation in response to lipoteichoic acid (LTA), a cell-wall component of Gram-positive bacteria, which leads to CASP1 activation and IL1B secretion. Involved in LPS-induced IL6 secretion; this activity may not require caspase enzymatic activity. The non-canonical inflammasome is required for innate immunity to cytosolic, but not vacuolar, bacteria. Plays a crucial role in the restriction of S.typhimurium replication in colonic epithelial cells during infection. Pyroptosis limits bacterial replication, while cytokine secretion promotes the recruitment and activation of immune cells and triggers mucosal inflammation. May also act as an activator of adaptive immunity in dendritic cells, following activation by oxidized phospholipid 1-palmitoyl-2-arachidonoyl- sn-glycero-3-phosphorylcholine, an oxidized phospholipid (oxPAPC). Cleavage of GSDMD is not strictly dependent on the consensus cleavage site but depends on an exosite interface on CASP4 that recognizes and binds the Gasdermin-D, C-terminal (GSDMD-CT) part. Catalyzes cleavage and maturation of IL18; IL18 processing also depends of the exosite interface on CASP4. In contrast, it does not directly process IL1B. During non-canonical inflammasome activation, cuts CGAS and may play a role in the regulation of antiviral innate immune activation. This chain is Caspase-4 (CASP4), found in Bos taurus (Bovine).